Here is a 270-residue protein sequence, read N- to C-terminus: SPbeta prophage-derived DNA ligase-like protein LigB (270 aa).

Lys25 acts as the N6-AMP-lysine intermediate in catalysis.

The protein belongs to the ATP-dependent DNA ligase family.

This is SPbeta prophage-derived DNA ligase-like protein LigB (ligB) from Bacillus subtilis (strain 168).